The chain runs to 295 residues: Glycine--tRNA ligase alpha subunit (295 aa).

This sequence belongs to the class-II aminoacyl-tRNA synthetase family. In terms of assembly, tetramer of two alpha and two beta subunits.

Its subcellular location is the cytoplasm. The catalysed reaction is tRNA(Gly) + glycine + ATP = glycyl-tRNA(Gly) + AMP + diphosphate. The polypeptide is Glycine--tRNA ligase alpha subunit (Prochlorococcus marinus (strain MIT 9215)).